A 178-amino-acid chain; its full sequence is Single-stranded DNA-binding protein 2 (178 aa).

The 106-residue stretch at 6 to 111 folds into the SSB domain; that stretch reads VNKVILVGNL…VVVSQSGTMQ (106 aa). A DNA-binding region spans residues 55-61; sequence WHRVVLY. The tract at residues 111-161 is disordered; it reads QMLGGRNSAGSGQQQGGWGQPQQPAAPSHSGMPPQQHPANEPPMDFDDDIP.

Homotetramer.

The polypeptide is Single-stranded DNA-binding protein 2 (ssb2) (Salmonella typhi).